Consider the following 395-residue polypeptide: Selection and upkeep of intraepithelial T-cells protein 7 (395 aa).

The first 25 residues, 1–25 (MMKPEFFCFSGFCVYFLFLQVVVSS), serve as a signal peptide directing secretion. The Ig-like V-type domain occupies 26 to 141 (EKLRVTTPTR…DAAIMNLNVT (116 aa)). Topologically, residues 26–248 (EKLRVTTPTR…FNRDRIWMES (223 aa)) are extracellular. Cys49 and Cys123 form a disulfide bridge. 2 N-linked (GlcNAc...) asparagine glycosylation sites follow: Asn92 and Asn139. In terms of domain architecture, Ig-like C1-type spans 142–233 (AVGLETEIHV…TGEEKQTSII (92 aa)). The cysteines at positions 163 and 217 are disulfide-linked. The helical transmembrane segment at 249 to 269 (LASIVWIMLSVYILYIICFYW) threads the bilayer. Over 270 to 287 (RTGCASGCLSKCFCVVTS) the chain is Cytoplasmic. A helical membrane pass occupies residues 288 to 308 (WPVQIVHLLFCTGTFFAIYLP). Topologically, residues 309–329 (HRSRVSLSDPQFPLYNNWITE) are extracellular. Residues 330-350 (LLFVILFLTICFALPIILLFI) form a helical membrane-spanning segment. At 351 to 395 (QFQFTSLTKWEKNKDGIMDQPRLGKAHETSSLYRKKTGKSWEQEK) the chain is on the cytoplasmic side. The tract at residues 371 to 395 (PRLGKAHETSSLYRKKTGKSWEQEK) is disordered.

Belongs to the SKINT family. Expressed in skin, thymus, testis and, to a lower extent, bladder.

The protein localises to the membrane. Functionally, may act by engaging a cell surface molecule on immature T-cells in the embryonic thymus. The protein is Selection and upkeep of intraepithelial T-cells protein 7 (Skint7) of Mus musculus (Mouse).